Here is a 278-residue protein sequence, read N- to C-terminus: Phosphonates import ATP-binding protein PhnC (278 aa).

The ABC transporter domain maps to 25 to 273 (LAVKGLVKAY…IIQDIYSDES (249 aa)). An ATP-binding site is contributed by 58 to 65 (GRSGAGKS).

It belongs to the ABC transporter superfamily. Phosphonates importer (TC 3.A.1.9.1) family. In terms of assembly, the complex is composed of two ATP-binding proteins (PhnC), two transmembrane proteins (PhnE) and a solute-binding protein (PhnD).

It localises to the cell inner membrane. It catalyses the reaction phosphonate(out) + ATP + H2O = phosphonate(in) + ADP + phosphate + H(+). In terms of biological role, part of the ABC transporter complex PhnCDE involved in phosphonates import. Responsible for energy coupling to the transport system. This is Phosphonates import ATP-binding protein PhnC from Yersinia pestis bv. Antiqua (strain Antiqua).